The following is a 254-amino-acid chain: Type III pantothenate kinase (254 aa).

Residue 6–13 (DLGNSAIK) coordinates ATP. Residues Tyr99 and 106–109 (GVDR) each bind substrate. The active-site Proton acceptor is the Asp108. Asp128 lines the K(+) pocket. Thr131 lines the ATP pocket. Thr182 provides a ligand contact to substrate.

The protein belongs to the type III pantothenate kinase family. Homodimer. NH4(+) is required as a cofactor. K(+) serves as cofactor.

The protein resides in the cytoplasm. The enzyme catalyses (R)-pantothenate + ATP = (R)-4'-phosphopantothenate + ADP + H(+). It functions in the pathway cofactor biosynthesis; coenzyme A biosynthesis; CoA from (R)-pantothenate: step 1/5. Functionally, catalyzes the phosphorylation of pantothenate (Pan), the first step in CoA biosynthesis. The protein is Type III pantothenate kinase of Halorhodospira halophila (strain DSM 244 / SL1) (Ectothiorhodospira halophila (strain DSM 244 / SL1)).